The chain runs to 397 residues: Acetate kinase (397 aa).

Asn-7 contributes to the Mg(2+) binding site. Lys-14 is an ATP binding site. Residue Arg-90 participates in substrate binding. Asp-147 functions as the Proton donor/acceptor in the catalytic mechanism. ATP is bound by residues 207–211, 282–284, and 330–334; these read HLGNG, DFR, and GIGEN. Glu-384 lines the Mg(2+) pocket.

Belongs to the acetokinase family. As to quaternary structure, homodimer. The cofactor is Mg(2+). It depends on Mn(2+) as a cofactor.

It localises to the cytoplasm. It carries out the reaction acetate + ATP = acetyl phosphate + ADP. It participates in metabolic intermediate biosynthesis; acetyl-CoA biosynthesis; acetyl-CoA from acetate: step 1/2. Catalyzes the formation of acetyl phosphate from acetate and ATP. Can also catalyze the reverse reaction. This chain is Acetate kinase, found in Agathobacter rectalis (strain ATCC 33656 / DSM 3377 / JCM 17463 / KCTC 5835 / VPI 0990) (Eubacterium rectale).